The sequence spans 516 residues: Glycosyl hydrolase family 109 protein 4 (516 aa).

A signal peptide spans 1–18; that stretch reads MKKIKLLLVAGACVVLSA. A lipid anchor (N-palmitoyl cysteine) is attached at cysteine 19. A lipid anchor (S-diacylglycerol cysteine) is attached at cysteine 19. NAD(+)-binding positions include 76-77, aspartate 98, 146-149, 166-167, and asparagine 195; these read MR, WLHH, and EV. Residues tyrosine 224, arginine 247, 259-262, and tyrosine 337 each bind substrate; that span reads YATH. An NAD(+)-binding site is contributed by tyrosine 259.

The protein belongs to the Gfo/Idh/MocA family. Glycosyl hydrolase 109 subfamily. Requires NAD(+) as cofactor.

It localises to the cell membrane. In terms of biological role, glycosidase. This is Glycosyl hydrolase family 109 protein 4 from Phocaeicola vulgatus (strain ATCC 8482 / DSM 1447 / JCM 5826 / CCUG 4940 / NBRC 14291 / NCTC 11154) (Bacteroides vulgatus).